The sequence spans 700 residues: Long-chain-fatty-acid--CoA ligase 1 (700 aa).

The tract at residues M1–R21 is disordered. Residue K189 forms a Glycyl lysine isopeptide (Lys-Gly) (interchain with G-Cter in ubiquitin) linkage. Y269–V280 serves as a coordination point for ATP. The short motif at D531 to Y580 is the FACS element.

It belongs to the ATP-dependent AMP-binding enzyme family. As to quaternary structure, interacts with FAT1. The cofactor is Mg(2+).

The protein resides in the lipid droplet. Its subcellular location is the cell membrane. The enzyme catalyses a long-chain fatty acid + ATP + CoA = a long-chain fatty acyl-CoA + AMP + diphosphate. The catalysed reaction is (9Z)-octadecenoate + ATP + CoA = (9Z)-octadecenoyl-CoA + AMP + diphosphate. It catalyses the reaction hexadecanoate + ATP + CoA = hexadecanoyl-CoA + AMP + diphosphate. It carries out the reaction (9Z)-hexadecenoate + ATP + CoA = (9Z)-hexadecenoyl-CoA + AMP + diphosphate. The enzyme catalyses tetradecanoate + ATP + CoA = tetradecanoyl-CoA + AMP + diphosphate. The catalysed reaction is (9Z)-tetradecenoate + ATP + CoA = (9Z)-tetradecenoyl-CoA + AMP + diphosphate. It catalyses the reaction (9Z,12Z)-octadecadienoate + ATP + CoA = (9Z,12Z)-octadecadienoyl-CoA + AMP + diphosphate. It carries out the reaction dodecanoate + ATP + CoA = dodecanoyl-CoA + AMP + diphosphate. The enzyme catalyses pentadecanoate + ATP + CoA = pentadecanoyl-CoA + AMP + diphosphate. The catalysed reaction is undecanoate + ATP + CoA = undecanoyl-CoA + AMP + diphosphate. It catalyses the reaction heptadecanoate + ATP + CoA = heptadecanoyl-CoA + AMP + diphosphate. It carries out the reaction octadecanoate + ATP + CoA = octadecanoyl-CoA + AMP + diphosphate. In terms of biological role, activates long-chain fatty acids (LCFA) by esterification of the fatty acids into metabolically active CoA-thioesters for subsequent degradation or incorporation into phospholipids. Also facilitates the transport of LCFAs into the cell, either by active transport or by decreasing the intracellular LCFA concentration. It may supplement intracellular myristoyl-CoA pools from exogenous myristate. Preferentially acts on C12:0-C16:0 fatty acids with myristic and pentadecanic acid (C15:0) having the highest activities. Also involved in long-chain base (LCB) uptake of sphingolipids. In contrast ot LCFA uptake, LCB uptake does not require ATP, suggesting that the enzyme is directly involved in active LCB uptake. Involved in the sphingolipid-to-glycerolipid metabolic pathway, converting the sphingolipid metabolite hexadecenoic acid to hexadecenoyl-CoA, which is then further converted to glycerolipids. This is Long-chain-fatty-acid--CoA ligase 1 (FAA1) from Saccharomyces cerevisiae (strain ATCC 204508 / S288c) (Baker's yeast).